Here is a 147-residue protein sequence, read N- to C-terminus: Myoglobin (147 aa).

Residues 2 to 141 (ADFDAVLKCW…IIADLEANYK (140 aa)) form the Globin domain. Histidine 60 contacts nitrite. Histidine 60 contributes to the O2 binding site. Residue histidine 89 coordinates heme b.

Belongs to the globin family. In terms of assembly, monomeric.

The protein resides in the cytoplasm. It localises to the sarcoplasm. It catalyses the reaction Fe(III)-heme b-[protein] + nitric oxide + H2O = Fe(II)-heme b-[protein] + nitrite + 2 H(+). The enzyme catalyses H2O2 + AH2 = A + 2 H2O. In terms of biological role, monomeric heme protein which primary function is to store oxygen and facilitate its diffusion within muscle tissues. Reversibly binds oxygen through a pentacoordinated heme iron and enables its timely and efficient release as needed during periods of heightened demand. Depending on the oxidative conditions of tissues and cells, and in addition to its ability to bind oxygen, it also has a nitrite reductase activity whereby it regulates the production of bioactive nitric oxide. Under stress conditions, like hypoxia and anoxia, it also protects cells against reactive oxygen species thanks to its pseudoperoxidase activity. The polypeptide is Myoglobin (mb) (Thunnus obesus (Bigeye tuna)).